Consider the following 1086-residue polypeptide: Phosphinothricin tripeptide synthetase PhsC (1086 aa).

Residues 22 to 43 are disordered; the sequence is RLRAAAAPGPDPAIPRRPDDDG. Residues 45–484 are condensation; it reads VPLSFAQHRL…LAALPVLTRD (440 aa). Residues 510–901 form an adenylation region; it reads LEDSARRHPD…GRTDHQVKLR (392 aa). The segment at 983–1007 is disordered; that stretch reads GKLDREALPDPLAQSGDTAGNRPPL. Residues 1006–1081 enclose the Carrier domain; sequence PLLDPVEERI…GLARSVSAER (76 aa). An O-(pantetheine 4'-phosphoryl)serine modification is found at serine 1041.

The protein belongs to the NRP synthetase family. The cofactor is pantetheine 4'-phosphate.

The enzyme catalyses holo-[peptidyl-carrier protein] + L-alanine + ATP = L-alanyl-[peptidyl-carrier protein] + AMP + diphosphate. It functions in the pathway secondary metabolite biosynthesis; bialaphos biosynthesis. In terms of biological role, involved in the biosynthesis of phosphinothricin tripeptide (PTT), also known as bialaphos (BA), a natural-product antibiotic and potent herbicide. Adenylates L-alanine and loads it onto a peptidyl carrier domain via a thioester linkage to the phosphopanthetheine moiety. Shows weaker activity with aminobutyric acid and L-serine. In Streptomyces viridochromogenes (strain DSM 40736 / JCM 4977 / BCRC 1201 / Tue 494), this protein is Phosphinothricin tripeptide synthetase PhsC.